The chain runs to 455 residues: Folate transporter 2 (455 aa).

Helical transmembrane passes span 42-64, 84-103, 110-131, 137-157, 177-195, 201-221, 242-261, and 281-301; these read IVVY…IYYL, YIPF…FSIF, YLFL…LNLS, LILF…EALV, IASK…GYFL, EYIF…CLFL, FINT…YMSG, and SFMG…IIIY. Residue Asn307 is glycosylated (N-linked (GlcNAc...) asparagine). A run of 2 helical transmembrane segments spans residues 313 to 331 and 347 to 367; these read TLII…PIIL and VLSG…PLFI. N-linked (GlcNAc...) asparagine glycosylation occurs at Asn416. Residues 417 to 438 form a helical membrane-spanning segment; sequence LSLYILTCGFFLLFSLTLVPLL.

The protein belongs to the major facilitator superfamily. Folate-biopterin transporter (TC 2.A.71) family.

It localises to the cell membrane. The enzyme catalyses folate(in) + H(+)(in) = folate(out) + H(+)(out). The catalysed reaction is (6S)-5-methyl-5,6,7,8-tetrahydrofolate(in) + H(+)(in) = (6S)-5-methyl-5,6,7,8-tetrahydrofolate(out) + H(+)(out). Transport of folates is inhibited by probenecid and methotrexate. Folate transporter with broad substrate specificity. Transports folic acid, folinic acid, pteroic acid, dihydropteroic acid, the folate precursor p-amino benzoic acid (pABA) and the human folate catabolite pABA monoglutamate. Can transport 5-methyltetrahydrofolate with low efficiency. The polypeptide is Folate transporter 2 (Plasmodium falciparum (isolate 3D7)).